A 207-amino-acid polypeptide reads, in one-letter code: Urease accessory protein UreE (207 aa).

The disordered stretch occupies residues H171 to H207. The span at H180–H194 shows a compositional bias: basic and acidic residues.

It belongs to the UreE family.

It localises to the cytoplasm. In terms of biological role, involved in urease metallocenter assembly. Binds nickel. Probably functions as a nickel donor during metallocenter assembly. The sequence is that of Urease accessory protein UreE from Burkholderia lata (strain ATCC 17760 / DSM 23089 / LMG 22485 / NCIMB 9086 / R18194 / 383).